A 142-amino-acid polypeptide reads, in one-letter code: UPF0310 protein PYRAB08750 (142 aa).

This sequence belongs to the UPF0310 family.

This is UPF0310 protein PYRAB08750 from Pyrococcus abyssi (strain GE5 / Orsay).